Here is a 1400-residue protein sequence, read N- to C-terminus: DNA topoisomerase 2 (1400 aa).

Positions 1–30 (MSSFESDSASDAESAFSDASSDFTPSSSVK) are enriched in low complexity. Residues 1–57 (MSSFESDSASDAESAFSDASSDFTPSSSVKSKGKVPLRDSTNTTAQPSAPATGDASD) form a disordered region. The segment covering 39-57 (DSTNTTAQPSAPATGDASD) has biased composition (polar residues). Residues N117, N146, 174 to 176 (SSN), and 187 to 194 (GRNGYGAK) contribute to the ATP site. An interaction with DNA region spans residues 379 to 386 (TKKEKGKK). 415 to 417 (QTK) is an ATP binding site. The 117-residue stretch at 497 to 613 (CTLILTEGDS…GLLEIPGFLL (117 aa)) folds into the Toprim domain. 3 residues coordinate Mg(2+): E503, D582, and D584. Residues 749 to 1214 (IPSILDGFKP…SAKDLWNSDL (466 aa)) form the Topo IIA-type catalytic domain. Catalysis depends on Y839, which acts as the O-(5'-phospho-DNA)-tyrosine intermediate. Residues 1019 to 1028 (KLISSISLSN) form an interaction with DNA region. Residues 1235–1400 (FGPTAKTSTR…NESDEDYMSE (166 aa)) form a disordered region. The segment covering 1262 to 1271 (SSTPKASTPT) has biased composition (low complexity). A compositionally biased stretch (basic residues) spans 1312-1321 (PKRKTPKSKP). Residues 1389 to 1400 (DGNESDEDYMSE) show a composition bias toward acidic residues.

Belongs to the type II topoisomerase family. As to quaternary structure, homodimer. It depends on Mg(2+) as a cofactor. The cofactor is Mn(2+). Ca(2+) is required as a cofactor.

The protein resides in the nucleus. The catalysed reaction is ATP-dependent breakage, passage and rejoining of double-stranded DNA.. In terms of biological role, control of topological states of DNA by transient breakage and subsequent rejoining of DNA strands. Topoisomerase II makes double-strand breaks. This chain is DNA topoisomerase 2 (TOP2), found in Meyerozyma guilliermondii (strain ATCC 6260 / CBS 566 / DSM 6381 / JCM 1539 / NBRC 10279 / NRRL Y-324) (Yeast).